Reading from the N-terminus, the 90-residue chain is Small ribosomal subunit protein uS17 (90 aa).

The protein belongs to the universal ribosomal protein uS17 family. Part of the 30S ribosomal subunit.

Functionally, one of the primary rRNA binding proteins, it binds specifically to the 5'-end of 16S ribosomal RNA. The protein is Small ribosomal subunit protein uS17 of Burkholderia multivorans (strain ATCC 17616 / 249).